Reading from the N-terminus, the 337-residue chain is DNA-directed RNA polymerase subunit alpha (337 aa).

The alpha N-terminal domain (alpha-NTD) stretch occupies residues 1–233 (MVREDVVGST…DLLIPFLHAE (233 aa)). The interval 265–337 (KGIPLTCIFI…FAINLLNKKL (73 aa)) is alpha C-terminal domain (alpha-CTD).

It belongs to the RNA polymerase alpha chain family. As to quaternary structure, in plastids the minimal PEP RNA polymerase catalytic core is composed of four subunits: alpha, beta, beta', and beta''. When a (nuclear-encoded) sigma factor is associated with the core the holoenzyme is formed, which can initiate transcription.

The protein resides in the plastid. It localises to the chloroplast. The enzyme catalyses RNA(n) + a ribonucleoside 5'-triphosphate = RNA(n+1) + diphosphate. Its function is as follows. DNA-dependent RNA polymerase catalyzes the transcription of DNA into RNA using the four ribonucleoside triphosphates as substrates. In Phalaenopsis aphrodite subsp. formosana (Moth orchid), this protein is DNA-directed RNA polymerase subunit alpha.